The sequence spans 473 residues: Photosystem II CP43 reaction center protein (473 aa).

A propeptide spanning residues 1–14 (MKTLYSLRRFYHVE) is cleaved from the precursor. T15 carries the post-translational modification N-acetylthreonine. The residue at position 15 (T15) is a Phosphothreonine. The next 5 membrane-spanning stretches (helical) occupy residues 69 to 93 (LFEV…PHLA), 134 to 155 (LLGP…KDRN), 178 to 200 (KALY…RKIT), 255 to 275 (KPFA…LSYS), and 291 to 312 (WFNN…ASQA). E367 serves as a coordination point for [CaMn4O5] cluster. Residues 447–471 (RARAAAAGFEKGIDRDFEPVLSMTP) form a helical membrane-spanning segment.

This sequence belongs to the PsbB/PsbC family. PsbC subfamily. In terms of assembly, PSII is composed of 1 copy each of membrane proteins PsbA, PsbB, PsbC, PsbD, PsbE, PsbF, PsbH, PsbI, PsbJ, PsbK, PsbL, PsbM, PsbT, PsbX, PsbY, PsbZ, Psb30/Ycf12, at least 3 peripheral proteins of the oxygen-evolving complex and a large number of cofactors. It forms dimeric complexes. Binds multiple chlorophylls and provides some of the ligands for the Ca-4Mn-5O cluster of the oxygen-evolving complex. It may also provide a ligand for a Cl- that is required for oxygen evolution. PSII binds additional chlorophylls, carotenoids and specific lipids. is required as a cofactor.

Its subcellular location is the plastid. It localises to the chloroplast thylakoid membrane. In terms of biological role, one of the components of the core complex of photosystem II (PSII). It binds chlorophyll and helps catalyze the primary light-induced photochemical processes of PSII. PSII is a light-driven water:plastoquinone oxidoreductase, using light energy to abstract electrons from H(2)O, generating O(2) and a proton gradient subsequently used for ATP formation. The protein is Photosystem II CP43 reaction center protein of Manihot esculenta (Cassava).